Here is a 211-residue protein sequence, read N- to C-terminus: MNDQKTTNTGLLTSTLKTKPKHNLKPSSEAIKKAVSKKEGHYKNKRFQKHNFNNKSEFEERIVKLKRISKTTKGGRNMRFSVLVVVGNKKGKVGYGIAKALEVPLAIKKAIKKAHNSIHTVEIHKGSIYHEVIGRKGASKVLLKPAPLGTGIIAGGAIRAIVELAGFSDIYTKNLGRNTPINMIHATMDGILKQLSPKKVALLRNKPISDL.

The S5 DRBM domain occupies 58–121; it reads FEERIVKLKR…KKAHNSIHTV (64 aa).

It belongs to the universal ribosomal protein uS5 family. Part of the 30S ribosomal subunit. Contacts proteins S4 and S8.

With S4 and S12 plays an important role in translational accuracy. Its function is as follows. Located at the back of the 30S subunit body where it stabilizes the conformation of the head with respect to the body. In Mycoplasma genitalium (strain ATCC 33530 / DSM 19775 / NCTC 10195 / G37) (Mycoplasmoides genitalium), this protein is Small ribosomal subunit protein uS5.